Reading from the N-terminus, the 428-residue chain is Putative zinc metalloprotease SAR1238 (428 aa).

Zn(2+) is bound at residue His21. Glu22 is a catalytic residue. His25 is a binding site for Zn(2+). 4 consecutive transmembrane segments (helical) span residues 172 to 194, 309 to 331, 352 to 374, and 401 to 420; these read FLTLFAGPLFNFILALVLFIGLA, GSTYIFSAVVGMLASIFTGGFSF, IISLIGYTALLSVNLGIMNLIPI, and TTIIAIGAIFMVVIMILVTW. The 84-residue stretch at 186-269 folds into the PDZ domain; the sequence is ALVLFIGLAY…TKSVELTPKK (84 aa).

Belongs to the peptidase M50B family. Zn(2+) is required as a cofactor.

The protein localises to the cell membrane. The polypeptide is Putative zinc metalloprotease SAR1238 (Staphylococcus aureus (strain MRSA252)).